We begin with the raw amino-acid sequence, 251 residues long: Coproheme decarboxylase (251 aa).

Residues Arg133, 147 to 151, His174, Gln187, and Ser225 each bind Fe-coproporphyrin III; that span reads YPMSK. Tyr147 is an active-site residue.

The protein belongs to the ChdC family. Type 1 subfamily. Homopentamer. Homohexamer in solution. Requires Fe-coproporphyrin III as cofactor.

The enzyme catalyses Fe-coproporphyrin III + 2 H2O2 + 2 H(+) = heme b + 2 CO2 + 4 H2O. It catalyses the reaction Fe-coproporphyrin III + H2O2 + H(+) = harderoheme III + CO2 + 2 H2O. The catalysed reaction is harderoheme III + H2O2 + H(+) = heme b + CO2 + 2 H2O. The protein operates within porphyrin-containing compound metabolism; protoheme biosynthesis. In terms of biological role, involved in coproporphyrin-dependent heme b biosynthesis. Catalyzes the decarboxylation of Fe-coproporphyrin III (coproheme) to heme b (protoheme IX), the last step of the pathway. The reaction occurs in a stepwise manner with a three-propionate intermediate. In Listeria monocytogenes serovar 1/2a (strain ATCC BAA-679 / EGD-e), this protein is Coproheme decarboxylase.